A 308-amino-acid polypeptide reads, in one-letter code: tRNA dimethylallyltransferase (308 aa).

G8 to S15 contacts ATP. T10–S15 serves as a coordination point for substrate.

Belongs to the IPP transferase family. Monomer. Requires Mg(2+) as cofactor.

It carries out the reaction adenosine(37) in tRNA + dimethylallyl diphosphate = N(6)-dimethylallyladenosine(37) in tRNA + diphosphate. Catalyzes the transfer of a dimethylallyl group onto the adenine at position 37 in tRNAs that read codons beginning with uridine, leading to the formation of N6-(dimethylallyl)adenosine (i(6)A). The sequence is that of tRNA dimethylallyltransferase from Mycolicibacterium vanbaalenii (strain DSM 7251 / JCM 13017 / BCRC 16820 / KCTC 9966 / NRRL B-24157 / PYR-1) (Mycobacterium vanbaalenii).